The sequence spans 301 residues: MKKVKVCSPGTSANLGPGYDIFGLALSNPYDIVEVEKTENGITISVEGEKAEEIPTNVDENTAGVVAKKMIEDFKIESGIHIHIIKGIKPGSGLGSSSASCAGIAFALNELFELKLSKLELVKYSSLGEAVAAGAPHADNVAPAIFGGFTLTTSYEPLEVLHIPVDLEVLVALPNIQVSTKTAREILPKEIPIKDMVNNVGKAAGMVYALYNNDLDLFGRYMSKDCVVEPCRANLIDGYTEVKEKVKDMVYGITISGSGPAIITIPKKEHVIDIENIFKEVWNCPVYYTKVGPGCYVEEIE.

89-99 is a binding site for ATP; that stretch reads KPGSGLGSSSA.

Belongs to the GHMP kinase family. Homoserine kinase subfamily.

Its subcellular location is the cytoplasm. It carries out the reaction L-homoserine + ATP = O-phospho-L-homoserine + ADP + H(+). Its pathway is amino-acid biosynthesis; L-threonine biosynthesis; L-threonine from L-aspartate: step 4/5. Catalyzes the ATP-dependent phosphorylation of L-homoserine to L-homoserine phosphate. The sequence is that of Homoserine kinase from Methanococcus maripaludis (strain DSM 14266 / JCM 13030 / NBRC 101832 / S2 / LL).